Reading from the N-terminus, the 254-residue chain is 3-deoxy-manno-octulosonate cytidylyltransferase (254 aa).

It belongs to the KdsB family.

The protein resides in the cytoplasm. The catalysed reaction is 3-deoxy-alpha-D-manno-oct-2-ulosonate + CTP = CMP-3-deoxy-beta-D-manno-octulosonate + diphosphate. It participates in nucleotide-sugar biosynthesis; CMP-3-deoxy-D-manno-octulosonate biosynthesis; CMP-3-deoxy-D-manno-octulosonate from 3-deoxy-D-manno-octulosonate and CTP: step 1/1. Its function is as follows. Activates KDO (a required 8-carbon sugar) for incorporation into bacterial lipopolysaccharide in Gram-negative bacteria. This is 3-deoxy-manno-octulosonate cytidylyltransferase from Lawsonia intracellularis (strain PHE/MN1-00).